Here is a 79-residue protein sequence, read N- to C-terminus: Probable [Fe-S]-dependent transcriptional repressor (79 aa).

The iron-sulfur cluster site is built by Cys-56, Cys-61, Cys-64, and Cys-71.

This sequence belongs to the FeoC family.

Functionally, may function as a transcriptional regulator that controls feoABC expression. This chain is Probable [Fe-S]-dependent transcriptional repressor, found in Klebsiella pneumoniae subsp. pneumoniae (strain ATCC 700721 / MGH 78578).